Consider the following 79-residue polypeptide: Protein NOI4 (79 aa).

The interval 31-68 (KARDEKKTGGKPGSPGKSSEGHVKSGGGDPSKPQPKKW) is disordered. S44 carries the post-translational modification Phosphoserine.

This sequence belongs to the RIN4 family. In terms of processing, proteolytic cleaved by P.syringae pv tomato AvrRpt2 after Gly-12; this cleavage is critical for subsequent proteasome-dependent elimination.

In Arabidopsis thaliana (Mouse-ear cress), this protein is Protein NOI4.